The sequence spans 142 residues: Protein tost-1 (142 aa).

The interval 97-123 (KVFEEEDKENAPTKKAVLKPSSTDEKK) is disordered.

As to quaternary structure, component of the tost-1 variant of the PETISCO complex (also called the pid-3, erh-2, tofu-6, and ife-3 small RNA complex) containing at least tost-1, tofu-6, ife-3, pid-3, and erh-2, which plays an essential role in embryogenesis. Within the complex interacts with erh-2. Within the complex interacts with pid-3 and tofu-6. In contrast to the pid-1 variant of the PETISCO complex, the tost-1 variant of the PETISCO complex plays a minor role in the biogenesis of a class of 21 nucleotide PIWI-interacting RNAs (piRNAs) that possess a uracil residue at the 5'-end (also called 21U-RNAs). Expressed in the germline.

Its subcellular location is the cytoplasm. It is found in the nucleus. In terms of biological role, component of the tost-1 variant of the PETISCO complex which plays an essential role in embryogenesis. Within the complex acts as an adapter which binds to the complex via erh-2. Does not seem to play a role in the biogenesis of a class of 21 nucleotide PIWI-interacting RNAs (piRNAs) that possess a uracil residue at the 5'-end (also called 21U-RNAs). May inhibit 21U-RNA accumulation. Required for chromosome segregation and cell division in early embryos. In Caenorhabditis elegans, this protein is Protein tost-1.